We begin with the raw amino-acid sequence, 148 residues long: IQ domain-containing protein F5 (148 aa).

IQ domains are found at residues 11 to 40 (ETSA…SAWI) and 67 to 96 (KTWA…AVRI).

The sequence is that of IQ domain-containing protein F5 (Iqcf5) from Mus musculus (Mouse).